Reading from the N-terminus, the 483-residue chain is Glutamyl-tRNA(Gln) amidotransferase subunit A (483 aa).

Active-site charge relay system residues include Lys77 and Ser152. Ser176 serves as the catalytic Acyl-ester intermediate.

The protein belongs to the amidase family. GatA subfamily. In terms of assembly, heterotrimer of A, B and C subunits.

It carries out the reaction L-glutamyl-tRNA(Gln) + L-glutamine + ATP + H2O = L-glutaminyl-tRNA(Gln) + L-glutamate + ADP + phosphate + H(+). Functionally, allows the formation of correctly charged Gln-tRNA(Gln) through the transamidation of misacylated Glu-tRNA(Gln) in organisms which lack glutaminyl-tRNA synthetase. The reaction takes place in the presence of glutamine and ATP through an activated gamma-phospho-Glu-tRNA(Gln). In Listeria monocytogenes serotype 4a (strain HCC23), this protein is Glutamyl-tRNA(Gln) amidotransferase subunit A.